The primary structure comprises 339 residues: Isopentenyl-diphosphate delta-isomerase (339 aa).

7–8 (RK) contributes to the substrate binding site. Residues Ser-65, 66–68 (SMT), Ser-96, and Asn-125 contribute to the FMN site. 96-98 (SQR) provides a ligand contact to substrate. A substrate-binding site is contributed by Gln-160. Residue Glu-161 coordinates Mg(2+). Residues Lys-192, Thr-222, and 293-294 (AG) each bind FMN.

The protein belongs to the IPP isomerase type 2 family. As to quaternary structure, homooctamer. Dimer of tetramers. The cofactor is FMN. NADPH serves as cofactor. Requires Mg(2+) as cofactor.

Its subcellular location is the cytoplasm. It carries out the reaction isopentenyl diphosphate = dimethylallyl diphosphate. Its function is as follows. Involved in the biosynthesis of isoprenoids. Catalyzes the 1,3-allylic rearrangement of the homoallylic substrate isopentenyl (IPP) to its allylic isomer, dimethylallyl diphosphate (DMAPP). This Vibrio campbellii (strain ATCC BAA-1116) protein is Isopentenyl-diphosphate delta-isomerase.